The sequence spans 1187 residues: Nucleolar protein 6 (1187 aa).

Residues 1-20 are compositionally biased toward basic and acidic residues; that stretch reads MGRIKENQSKKKTLLRDSKA. Disordered stretches follow at residues 1-64 and 1134-1187; these read MGRI…FKHP and REQR…SALC.

Belongs to the NRAP family. Part of the small subunit (SSU) processome, composed of more than 70 proteins and the RNA chaperone small nucleolar RNA (snoRNA) U3.

The protein localises to the nucleus. Its subcellular location is the nucleolus. It is found in the chromosome. Functionally, part of the small subunit (SSU) processome, first precursor of the small eukaryotic ribosomal subunit. During the assembly of the SSU processome in the nucleolus, many ribosome biogenesis factors, an RNA chaperone and ribosomal proteins associate with the nascent pre-rRNA and work in concert to generate RNA folding, modifications, rearrangements and cleavage as well as targeted degradation of pre-ribosomal RNA by the RNA exosome. The sequence is that of Nucleolar protein 6 from Drosophila mojavensis (Fruit fly).